Here is a 159-residue protein sequence, read N- to C-terminus: Secreted RxLR effector protein 50 (159 aa).

Positions 1–19 (MRSSTVLYVLGAAILAVNG) are cleaved as a signal peptide. The short motif at 38–54 (RWLRSNAMEHETDDEER) is the RxLR-dEER element.

It belongs to the RxLR effector family.

The protein resides in the secreted. It localises to the host nucleus. It is found in the host cytoplasm. Secreted effector that completely suppresses the host cell death induced by cell death-inducing proteins. This Plasmopara viticola (Downy mildew of grapevine) protein is Secreted RxLR effector protein 50.